Reading from the N-terminus, the 521-residue chain is Lymphocyte activation gene 3 protein (521 aa).

Residues 1-23 (MREDLLLGFLLLGLLWEAPVVSS) form the signal peptide. The Extracellular portion of the chain corresponds to 24-442 (GPGKELPVVW…ISGDLKGGHL (419 aa)). The Ig-like V-type domain maps to 37-163 (GAPVHLPCSL…LSCSLRLRVG (127 aa)). An interaction with FGL1 region spans residues 37-246 (GAPVHLPCSL…LTYRDGFNVS (210 aa)). The cysteines at positions 44 and 156 are disulfide-linked. Ig-like C2-type domains are found at residues 165 to 246 (ASMI…FNVS), 258 to 341 (PVAP…ATVT), and 345 to 412 (ITVT…EGQR). Asn184 is a glycosylation site (N-linked (GlcNAc...) asparagine). Cys185 and Cys235 are joined by a disulfide. N-linked (GlcNAc...) asparagine glycans are attached at residues Asn244, Asn309, Asn337, and Asn381. Cys276 and Cys327 are oxidised to a cystine. Cys363 and Cys405 are disulfide-bonded. The connecting peptide stretch occupies residues 422-442 (ESSSGAHSARRISGDLKGGHL). The helical transmembrane segment at 443-463 (VLVLILGALSLFLLVAGAFGF) threads the bilayer. The Cytoplasmic portion of the chain corresponds to 464 to 521 (HWWRKQLLLRRFSALEHGIQPFPAQRKIEELERELETEMGQEPEPEPEPQLEPEPRQL). The KIEELE motif signature appears at 490–495 (KIEELE). The 13 X 2 AA tandem repeats of E-X stretch occupies residues 493–518 (ELERELETEMGQEPEPEPEPQLEPEP). Residues 493 to 521 (ELERELETEMGQEPEPEPEPQLEPEPRQL) form a disordered region. Positions 500–514 (TEMGQEPEPEPEPQL) are enriched in acidic residues.

It belongs to the LAG3 family. As to quaternary structure, interacts with MHC class II (MHC-II); selectively recognizes stable complexes of peptide and MHC-II. Interacts with FGL1 (via the Fibrinogen C-terminal domain). In terms of processing, proteolytically cleaved by ADAM10 and ADAM17 within the connecting peptide region, leading to release of Secreted lymphocyte activation gene 3 protein (sLAG-3). ADAM10 mediates constitutive cleavage, but cleavage increases following T-cell activation, whereas shedding by ADAM17 is induced by TCR signaling in a PRKCQ-dependent manner. In terms of tissue distribution, primarily expressed in activated CD4(+) and CD8(+) T-cells. Also expressed in a subset of regulatory T-cells (Tregs), such as natural CD4(+)CD25(+) Tregs. Also expressed on plasmacytoid dendritic cells (pDCs).

It is found in the cell membrane. The protein localises to the secreted. In terms of biological role, lymphocyte activation gene 3 protein: Inhibitory receptor on antigen activated T-cells. Delivers inhibitory signals upon binding to ligands, such as FGL1. FGL1 constitutes a major ligand of LAG3 and is responsible for LAG3 T-cell inhibitory function. Following TCR engagement, LAG3 associates with CD3-TCR in the immunological synapse and directly inhibits T-cell activation. May inhibit antigen-specific T-cell activation in synergy with PDCD1/PD-1, possibly by acting as a coreceptor for PDCD1/PD-1. Negatively regulates the proliferation, activation, effector function and homeostasis of both CD8(+) and CD4(+) T-cells. Also mediates immune tolerance: constitutively expressed on a subset of regulatory T-cells (Tregs) and contributes to their suppressive function. Also acts as a negative regulator of plasmacytoid dendritic cell (pDCs) activation. Binds MHC class II (MHC-II); the precise role of MHC-II-binding is however unclear. Its function is as follows. May function as a ligand for MHC class II (MHC-II) on antigen-presenting cells (APC), promoting APC activation/maturation and driving Th1 immune response. This Mus musculus (Mouse) protein is Lymphocyte activation gene 3 protein.